A 674-amino-acid chain; its full sequence is MVLYNFKKIQVVPTSKDFIDIVLSKTQRKTPTEIHKQYAIGRIRTFYMRKVKYTAQSYHEKLTQIIGDFPLLDDIHPFYADLINVLYDKDHYKLALGQLNTARNLIDNLSKDYLRLLKYGDSLYRCKQLKRASLGRMCTLMLKQGPSLQYLEQVRQHLARLPSIDPNTRTLLLTGYPNVGKSSFMNKLTRANVDVQPYAFTTKSLFVGHTDFKYNTWQVIDTPGILDHPLDERNTIEMQSITALAHLHSCVLFLIDISERCGYTIKQQVDLFFSIKALFLNKPLLVVLNKIDARRPEDVPEDDWKLIQSLADPARGGIGGTHLIPMSNLTEEGIAKVKDTACSILFEERVEKKLKSTRIEKEIHRLHLAQPQARDKKVRAPCIPESVIAAARQADMDEESDYKKPTLTAAMMEMIEEHENDEKYAQGIIPIYDVNAWKKKYLLKNDEWKFDIVPEIINGQNIADFVDPDILKRLEELEMEEEAFLEELKNAEDDEESDLDEENEALYDEIQEKKHELRINHQIKDSSKPQLSKGRRGIDTKEMASHLKSMHHEDDEIGDIIQSVRDHSKSRISGKKRSRSASRSDSQAPTSEERGLSLNRSKSRQRSTTRIASPAPGEGFHDLAQKEKADKLDKRSRKKRNQDGRKGESDRHVYNLMPKHLFSGKRSGGTNDFR.

In terms of domain architecture, OBG-type G spans 169 to 346 (RTLLLTGYPN…VKDTACSILF (178 aa)). GTP-binding positions include 175–182 (GYPNVGKS), 221–225 (DTPGI), and 289–292 (NKID). Basic and acidic residues predominate over residues 518–527 (RINHQIKDSS). Disordered regions lie at residues 518-538 (RINHQIKDSSKPQLSKGRRGI) and 564-674 (VRDH…NDFR). Residues 570–580 (SRISGKKRSRS) show a composition bias toward basic residues. 2 stretches are compositionally biased toward basic and acidic residues: residues 619 to 633 (GFHDLAQKEKADKLD) and 641 to 653 (NQDGRKGESDRHV).

This sequence belongs to the TRAFAC class OBG-HflX-like GTPase superfamily. OBG GTPase family. NOG subfamily.

It localises to the nucleus. The protein localises to the nucleolus. Involved in the biogenesis of the 60S ribosomal subunit. This Dictyostelium discoideum (Social amoeba) protein is Probable nucleolar GTP-binding protein 1 (nog1).